The primary structure comprises 675 residues: Heat shock 70 kDa protein 12A (675 aa).

Residues 1–45 form a disordered region; that stretch reads MADKEAGGGDAGPRETAPTSTYSSPARSLGDTGITPLSPSHILND. Ala2 is subject to N-acetylalanine. Residues 17–26 show a composition bias toward polar residues; the sequence is APTSTYSSPA.

This sequence belongs to the heat shock protein 70 family. In terms of assembly, interacts with SORL1 (via cytosolic C-terminus); this interaction affects SORL1 internalization and subcellular localization. Expressed most strongly in brain, kidney and heart with little or no expression in other tissues. In the brain, expressed in glial cells, including astrocytes (at protein level). In the aorta, preferentially expressed in lesions.

The protein resides in the cytoplasm. The protein localises to the nucleus. Adapter protein for SORL1, but not SORT1. Delays SORL1 internalization and affects SORL1 subcellular localization. This is Heat shock 70 kDa protein 12A (Hspa12a) from Mus musculus (Mouse).